A 350-amino-acid polypeptide reads, in one-letter code: MAARLCARCLPPAWLCRQAGQGQSRHYRAAVCTELKQPLTIQEVAPRPIGPQEVRVDVHFCGINFADNLVCRGQYQEKPPLPFTPGMEFSGVVLEAGADVSTVKKGDRVIGVSNFHSMAEQCITDQKTLWRIPENVSLQDAAVLPVSYGTAILAVDHRARIQPGETVLVTAAAGATGLAVIDVATNVFCAKVIAAAGSDEKCKLAMQRGAQSGVNYSQGSLKDAVKKLVGSSGVNVAIDMVGGDVFLDSLRSLAWEGRIVVLGFAGGNIASVPSNLLLLKNISAMGLYWGRYQHQDFAVFSKSMSTALQYCQQGLIHPHTGAVFKLEKVNDAFLHVMQRKSTGKVLLSLK.

The residue at position 36 (lysine 36) is an N6-acetyllysine. Residue lysine 201 is modified to N6-succinyllysine. 2 positions are modified to N6-acetyllysine: lysine 302 and lysine 328.

It belongs to the zinc-containing alcohol dehydrogenase family. Quinone oxidoreductase subfamily.

This is Quinone oxidoreductase-like protein 2 from Rattus norvegicus (Rat).